The chain runs to 105 residues: uncharacterized protein (105 aa).

Residues Gly41 to Phe62 form a helical membrane-spanning segment.

The protein resides in the membrane. This is an uncharacterized protein from Saccharomyces cerevisiae (strain ATCC 204508 / S288c) (Baker's yeast).